Consider the following 452-residue polypeptide: Mannan endo-1,6-alpha-mannosidase DCW1 (452 aa).

The N-terminal stretch at 1 to 18 (MKFSIYLIISLFSSFSHA) is a signal peptide. N-linked (GlcNAc...) asparagine glycans are attached at residues Asn-25, Asn-81, Asn-106, Asn-130, Asn-200, Asn-237, Asn-240, Asn-262, Asn-271, and Asn-286. Gly-431 carries the GPI-anchor amidated glycine lipid modification. A propeptide spans 432 to 452 (AGIITAIIGASLVGSCVWLIL) (removed in mature form).

It belongs to the glycosyl hydrolase 76 family.

The protein resides in the cell membrane. The catalysed reaction is Random hydrolysis of (1-&gt;6)-alpha-D-mannosidic linkages in unbranched (1-&gt;6)-mannans.. In terms of biological role, probable mannosidase required for normal synthesis of the cell wall. This Candida albicans (strain SC5314 / ATCC MYA-2876) (Yeast) protein is Mannan endo-1,6-alpha-mannosidase DCW1 (DCW1).